We begin with the raw amino-acid sequence, 807 residues long: MSNYDSIFIKSLRWIQKWLVQTIVVPHDPLTDLNLDPSKPVVYVMKTESISDLAALSGITANFGLPSPYDPLTLDKVSIARVVCLEGRKPMIGQREGGEKFLDSFTQLLALHKQDKQLDIQLVPVSLYWGRTPGKEDDTMKAAVFERENPTWLRKFFMILFLGRHNFVQFSNAVSLRHMADEHGTDKSIAHKLVRVARVHFRRQRKVMTGPLLPNRQALFNALLKSESIKKAIEEEATNKKISIEKARETAIVYLDEIAADYSDSLVRITERFLTWLWNKLYSGINIERAEQVRQLHHDGHEIVYVPCHRSHMDYLLISYILYYQGMVPPHIAAGINLNFWPAGPMFRRGGAFFIRRSFNGNKLYTAVFREYLDQLFAKGYSVEYFTEGGRSRTGRLLAPKTGMIAMTMNSVLRGIERPVTLVPVYLGYDHVMEVATYHKELSGKKKQKESLWQVFGAIRKLGNFGQGYVNFGEPINMQNFLTEQAPEWRAELAKDPEQKPSWFTPAVNVLANRVMTNINGAAAASSVTLTSLILLASEQNALERTQLERQLDLYLNLLKKVPYTPFTSVAQGDSQQVVDHCLGLNKFISTRDALGEIISIDPKIAVTMSYYRNNIIHLMVVPSLIASCLVQYEVRSRSEIKAIVNDFYPLLKAELFMGIADLDSYIDDIIDLLIEEQLVEESAGLSIVESHISQLWLMAQTVSETLQRYAIIFNLLAHKPNVERADLENDSHLLAQRLGALHGITAPEFYDKKLYNTLSVKLKELGYLSAVEKQVDVARIRDHANGLLWSSVRQTIIDSVAAEHGH.

An HXXXXD motif motif is present at residues 308-313 (CHRSHM).

It belongs to the GPAT/DAPAT family.

The protein localises to the cell inner membrane. It catalyses the reaction sn-glycerol 3-phosphate + an acyl-CoA = a 1-acyl-sn-glycero-3-phosphate + CoA. Its pathway is phospholipid metabolism; CDP-diacylglycerol biosynthesis; CDP-diacylglycerol from sn-glycerol 3-phosphate: step 1/3. This chain is Glycerol-3-phosphate acyltransferase, found in Shewanella denitrificans (strain OS217 / ATCC BAA-1090 / DSM 15013).